We begin with the raw amino-acid sequence, 328 residues long: Cysteine proteinase COT44 (328 aa).

A propeptide spans 1-99 (MSIYLRWSLE…KYSAAVNVDE (99 aa)) (activation peptide). Residues N48 and N60 are each glycosylated (N-linked (GlcNAc...) asparagine). 3 disulfide bridges follow: C121-C163, C155-C196, and C254-C305. C124 is an active-site residue. Residues H260 and N280 contribute to the active site.

This sequence belongs to the peptidase C1 family. As to expression, present in both cotyledons and axes.

Functionally, may function in an early event in cortical cell differentiation. The protein is Cysteine proteinase COT44 of Brassica napus (Rape).